A 70-amino-acid polypeptide reads, in one-letter code: DNA-directed RNA polymerase subunit omega (70 aa).

This sequence belongs to the RNA polymerase subunit omega family. The RNAP catalytic core consists of 2 alpha, 1 beta, 1 beta' and 1 omega subunit. When a sigma factor is associated with the core the holoenzyme is formed, which can initiate transcription.

It carries out the reaction RNA(n) + a ribonucleoside 5'-triphosphate = RNA(n+1) + diphosphate. Functionally, promotes RNA polymerase assembly. Latches the N- and C-terminal regions of the beta' subunit thereby facilitating its interaction with the beta and alpha subunits. The protein is DNA-directed RNA polymerase subunit omega of Staphylococcus epidermidis (strain ATCC 12228 / FDA PCI 1200).